The sequence spans 1054 residues: MGIGEDQMQGSSGREEKIFVSVRLRPLNVRERARNDVADWECINDETVIYRSHLSISERSMYPTAYTFDRVFGPECSTREVYDQGAKEVALSVVSGVHASVFAYGQTSSGKTYTMIGITDYALADIYDYIEKHNEREFILKFSAMEIYNESVRDLLSTDISPLRVLDDPEKGTVVEKLTEETLRDWNHFKELLSICIAQRQIGETALNEVSSRSHQILRLTVESTAREYLAKDKFSTLTATVNFIDLAGSERASQSLSAGTRLKEGGHINRSLLTLGTVIRKLSKGKNGHIPFRDSKLTRILQTSLGGNARTSIICTLSPARVHVEQSRNTLLFASCAKEVTTNAQVNVVMSDKALVRHLQRELAKLESELSSPRQALVVSDTTALLKEKDLQIEKLNKEVFQLAQELERAYSRIEDLQQIIGEAPQQEILSTDSEQTNTNVVLGRQYPKLRVRSSWESLNITPESPLSAQASIMISPQSTEHGSDENVFQLSDLRLNSGASSPAQHLAFVTPGKFTKVRLNIRGVESKNQLHIHKGESVDQSRVQGERLHEMDEPSEVDSEDTCTELQCIETESPGIIMYPEPNILPDRCKAVSALPLCEPESKNSRPPTETAEEKEEKEETEEKEEEEEERVKEVSSVSIQTKEKSGPIKVSPRCVLSLTDESFPDESSNLKRDPTHQDFVTPSPEKLYAWHLESNGQTAGGTGFTRSRSCGASFVSSSSFSLSERDANTPPCWYQNERAESNLKPSNSKRPPLPKHISRMSMPATWFEKDFNHTQRMPAGLDGVNMIKSSPNGSQVSTSKSHVYARQTSGRALISQDEGEETVPQRDKRIIHLSMEEIEQKFLALRSSKSFKDAAVDPIQDYLTMPLNWPLEFKRLEMEIIELWHACNVSLSHRSYFFLLFRGDQKDCLYMEVELRRLKYIRETFTHNNKAIENGRTLTSMSSLRALNRERYKLSQLMQKKLTKEERENVFLRWGIGLNTKHRRLQLAHRLWSESKDMDHVRESASVVGKLMGFVDMDLASKEMFGLNFSLRPRAKKSSLWKRSVLSLSIL.

The 325-residue stretch at 17 to 341 (KIFVSVRLRP…LLFASCAKEV (325 aa)) folds into the Kinesin motor domain. An ATP-binding site is contributed by 105–112 (GQTSSGKT). Coiled-coil stretches lie at residues 350–425 (VMSD…IGEA) and 611–640 (TETAEEKEEKEETEEKEEEEEERVKEVSSV). Disordered stretches follow at residues 600–648 (CEPE…KEKS) and 740–760 (ERAESNLKPSNSKRPPLPKHI). Acidic residues predominate over residues 613–631 (TAEEKEEKEETEEKEEEEE).

The protein belongs to the TRAFAC class myosin-kinesin ATPase superfamily. Kinesin family. KIN-7 subfamily.

The polypeptide is Kinesin-like protein KIN-7G (Arabidopsis thaliana (Mouse-ear cress)).